The sequence spans 320 residues: Methionyl-tRNA formyltransferase (320 aa).

114–117 (SLLP) contributes to the (6S)-5,6,7,8-tetrahydrofolate binding site.

The protein belongs to the Fmt family.

It carries out the reaction L-methionyl-tRNA(fMet) + (6R)-10-formyltetrahydrofolate = N-formyl-L-methionyl-tRNA(fMet) + (6S)-5,6,7,8-tetrahydrofolate + H(+). Its function is as follows. Attaches a formyl group to the free amino group of methionyl-tRNA(fMet). The formyl group appears to play a dual role in the initiator identity of N-formylmethionyl-tRNA by promoting its recognition by IF2 and preventing the misappropriation of this tRNA by the elongation apparatus. In Acinetobacter baumannii (strain ACICU), this protein is Methionyl-tRNA formyltransferase.